Reading from the N-terminus, the 633-residue chain is Probable potassium transport system protein Kup 2 (633 aa).

Helical transmembrane passes span 18-38, 61-81, 109-129, 145-165, 173-193, 211-231, 255-275, 287-307, 345-365, 371-391, 405-425, and 427-447; these read FLAMTIGAIGVVYGDIGTSPL, LISLMLWTLTIIVTFKYVLFL, LMFMAGILGAALFIGDAMITP, PAFHDYVLPISVGIMVLLFAV, VSIFFGPITLIWFLVLGAAGV, AVTFLWNAGFVGFIVLGAVFL, WFAVVFPALTLNYLGQGALVL, LMFPNWALLPVVLLATAATII, IYLPFVNNALLAGVIVLMFMF, LATAYGISVTGAMVVTTVLAF, ATAVLLPLLVLELFFLGANLF, and IHDGGYVPILIAGTLMTTMWT.

Belongs to the HAK/KUP transporter (TC 2.A.72) family.

The protein resides in the cell inner membrane. The catalysed reaction is K(+)(in) + H(+)(in) = K(+)(out) + H(+)(out). In terms of biological role, transport of potassium into the cell. Likely operates as a K(+):H(+) symporter. This Sinorhizobium medicae (strain WSM419) (Ensifer medicae) protein is Probable potassium transport system protein Kup 2.